Consider the following 486-residue polypeptide: 3-sulfolactaldehyde dehydrogenase (486 aa).

NADP(+) is bound by residues 157–158 (WN), 181–184 (RPAS), and 234–235 (GS). Glutamate 256 functions as the Proton acceptor in the catalytic mechanism. Leucine 257 is a binding site for NADP(+). Cysteine 290 serves as the catalytic Nucleophile. Residue glutamate 387 participates in NADP(+) binding.

This sequence belongs to the aldehyde dehydrogenase family.

The enzyme catalyses (2S)-3-sulfolactaldehyde + NADP(+) + H2O = (2S)-3-sulfolactate + NADPH + 2 H(+). The catalysed reaction is (2S)-3-sulfolactaldehyde + NAD(+) + H2O = (2S)-3-sulfolactate + NADH + 2 H(+). In terms of biological role, catalyzes the oxidation of (2S)-3-sulfolactaldehyde to (2S)-3-sulfolactate, using both NAD(+) and NADP(+) as electron acceptors. Is involved in a degradation pathway of sulfoquinovose (SQ) that allows P.putida SQ1 to use SQ as the sole carbon and energy source for growth. This is 3-sulfolactaldehyde dehydrogenase from Pseudomonas putida (Arthrobacter siderocapsulatus).